The chain runs to 817 residues: Protein Jade-3 (817 aa).

Residues 1 to 38 (MKRLRNLSSSDSSDNESPSTSFSSCFQHKGKGKCTADD) are disordered. Residues 8–24 (SSSDSSDNESPSTSFSS) are compositionally biased toward low complexity. The PHD-type 1 zinc-finger motif lies at 202 to 252 (DVICDVCRSPDSEEGNDMVFCDRCNICVHQACYGILKVPEGSWLCRTCVLG). A C2HC pre-PHD-type zinc finger spans residues 254-288 (HPQCILCPKTGGAMKATRTGTKWAHVSCALWIPEV). A PHD-type 2 zinc finger spans residues 312 to 368 (LVCSLCKLKTGACIQCSVKSCITAFHVTCAFEHSLEMKTILDEGDEVKFKSYCLKHS). Disordered stretches follow at residues 375–396 (ISEQEEPHKTHSDNRPTESERT), 665–689 (NGVLSSGDRTQRDSSSQTSPGQNSE), and 719–817 (LVRT…SVQR). Residues 379-396 (EEPHKTHSDNRPTESERT) show a composition bias toward basic and acidic residues. The segment covering 667–689 (VLSSGDRTQRDSSSQTSPGQNSE) has biased composition (polar residues). Residues 722–743 (TTEDLRSSEKPQRRQSVKERLW) are compositionally biased toward basic and acidic residues. Polar residues predominate over residues 747-758 (PADTQTSGTPYQ). The span at 777-799 (DENKDHMLLRRNSRESPNRDSCR) shows a compositional bias: basic and acidic residues. Over residues 801-810 (SRIRGKRKMT) the composition is skewed to basic residues.

This sequence belongs to the JADE family. As to quaternary structure, component of the HBO1 complex.

Scaffold subunit of some HBO1 complexes, which have a histone H4 acetyltransferase activity. The chain is Protein Jade-3 (jade3) from Xenopus tropicalis (Western clawed frog).